The primary structure comprises 323 residues: Global nitrogen regulator NrpRI (323 aa).

The segment at 11–76 (IEIMRVIHES…TLTDLGENEM (66 aa)) is winged helix-turn-helix. An NRD region spans residues 86 to 323 (GFVISRIEEM…MLDYQTMKEI (238 aa)).

It belongs to the NrpR family. Forms a complex with NrpRII and the general archaeal transcription factors TBP and TFB. Interacts directly with NrpRII.

Under nitrogen limitation, binding of 2-oxoglutarate to the NrpRI/NrpRII complex decreases the binding affinity of NrpRI to DNA as well as the binding affinity of NrpRII to TBP and TFB, which leads to removal of the complex from the operator, RNA polymerase recruitment and initiation of transcription. Plays a major role in nitrogen regulation. Under nitrogen sufficiency, binds to the nifH and the glnk1 promoters, leading to repression of the transcription of the genes. The sequence is that of Global nitrogen regulator NrpRI from Methanosarcina mazei (strain ATCC BAA-159 / DSM 3647 / Goe1 / Go1 / JCM 11833 / OCM 88) (Methanosarcina frisia).